The primary structure comprises 175 residues: NADH-ubiquinone oxidoreductase chain 6 (175 aa).

The next 5 membrane-spanning stretches (helical) occupy residues 1–21, 26–46, 47–67, 87–107, and 152–172; these read MMYM…GFSS, IYGG…VMGL, GGSF…LVVF, VILS…VWMI, and WLVI…IEIT.

This sequence belongs to the complex I subunit 6 family.

It localises to the mitochondrion membrane. It carries out the reaction a ubiquinone + NADH + 5 H(+)(in) = a ubiquinol + NAD(+) + 4 H(+)(out). Core subunit of the mitochondrial membrane respiratory chain NADH dehydrogenase (Complex I) that is believed to belong to the minimal assembly required for catalysis. Complex I functions in the transfer of electrons from NADH to the respiratory chain. The immediate electron acceptor for the enzyme is believed to be ubiquinone. The protein is NADH-ubiquinone oxidoreductase chain 6 (MT-ND6) of Dasypus novemcinctus (Nine-banded armadillo).